The chain runs to 127 residues: MIFRMTQNLRTGKLGEQMAAAYLEEAGYRILEQNYRCRFGEIDIIARDGDTIVFVEVKSRRSDKYGLPQLAVGPDKQMRISKISLFYLQTKRLDSYNARFDVVAVSLKPEGCRIELIKDAFELAYGR.

It belongs to the UPF0102 family.

In Syntrophus aciditrophicus (strain SB), this protein is UPF0102 protein SYNAS_23220.